The sequence spans 255 residues: 1-(5-phosphoribosyl)-5-[(5-phosphoribosylamino)methylideneamino] imidazole-4-carboxamide isomerase (255 aa).

Residue D8 is the Proton acceptor of the active site. The active-site Proton donor is the D129.

The protein belongs to the HisA/HisF family.

The protein localises to the cytoplasm. The enzyme catalyses 1-(5-phospho-beta-D-ribosyl)-5-[(5-phospho-beta-D-ribosylamino)methylideneamino]imidazole-4-carboxamide = 5-[(5-phospho-1-deoxy-D-ribulos-1-ylimino)methylamino]-1-(5-phospho-beta-D-ribosyl)imidazole-4-carboxamide. It participates in amino-acid biosynthesis; L-histidine biosynthesis; L-histidine from 5-phospho-alpha-D-ribose 1-diphosphate: step 4/9. This chain is 1-(5-phosphoribosyl)-5-[(5-phosphoribosylamino)methylideneamino] imidazole-4-carboxamide isomerase, found in Prochlorococcus marinus (strain MIT 9313).